The chain runs to 129 residues: Thioredoxin H7 (129 aa).

The Thioredoxin domain maps to 6–129 (SSVHDVHSSM…LVKKIEQHRV (124 aa)). Residues Cys-55 and Cys-58 each act as nucleophile in the active site. Cys-55 and Cys-58 are joined by a disulfide.

This sequence belongs to the thioredoxin family. Plant H-type subfamily.

It is found in the cytoplasm. Functionally, probable thiol-disulfide oxidoreductase that may be involved in the redox regulation of a number of cytosolic enzymes. This Arabidopsis thaliana (Mouse-ear cress) protein is Thioredoxin H7 (TRX7).